Here is a 185-residue protein sequence, read N- to C-terminus: Large ribosomal subunit protein uL5 (185 aa).

It belongs to the universal ribosomal protein uL5 family. As to quaternary structure, part of the 50S ribosomal subunit; part of the 5S rRNA/L5/L18/L25 subcomplex. Contacts the 5S rRNA and the P site tRNA. Forms a bridge to the 30S subunit in the 70S ribosome.

Its function is as follows. This is one of the proteins that bind and probably mediate the attachment of the 5S RNA into the large ribosomal subunit, where it forms part of the central protuberance. In the 70S ribosome it contacts protein S13 of the 30S subunit (bridge B1b), connecting the 2 subunits; this bridge is implicated in subunit movement. Contacts the P site tRNA; the 5S rRNA and some of its associated proteins might help stabilize positioning of ribosome-bound tRNAs. The protein is Large ribosomal subunit protein uL5 of Parvibaculum lavamentivorans (strain DS-1 / DSM 13023 / NCIMB 13966).